A 281-amino-acid chain; its full sequence is Bis(5'-nucleosyl)-tetraphosphatase, symmetrical (281 aa).

The protein belongs to the Ap4A hydrolase family.

It carries out the reaction P(1),P(4)-bis(5'-adenosyl) tetraphosphate + H2O = 2 ADP + 2 H(+). Functionally, hydrolyzes diadenosine 5',5'''-P1,P4-tetraphosphate to yield ADP. The polypeptide is Bis(5'-nucleosyl)-tetraphosphatase, symmetrical (Acidovorax ebreus (strain TPSY) (Diaphorobacter sp. (strain TPSY))).